The chain runs to 102 residues: Large ribosomal subunit protein uL23c (102 aa).

It belongs to the universal ribosomal protein uL23 family. As to quaternary structure, part of the 50S ribosomal subunit.

Its subcellular location is the plastid. The protein localises to the chloroplast. Binds to 23S rRNA. This Phaeodactylum tricornutum (strain CCAP 1055/1) protein is Large ribosomal subunit protein uL23c (rpl23).